The chain runs to 460 residues: Probable Xaa-Pro aminopeptidase PEPP (460 aa).

Mn(2+) is bound by residues aspartate 256, aspartate 267, glutamate 390, and glutamate 430.

The protein belongs to the peptidase M24B family. Requires Mn(2+) as cofactor.

The catalysed reaction is Release of any N-terminal amino acid, including proline, that is linked to proline, even from a dipeptide or tripeptide.. Its function is as follows. Catalyzes the removal of a penultimate prolyl residue from the N-termini of peptides. The sequence is that of Probable Xaa-Pro aminopeptidase PEPP (PEPP) from Podospora anserina (strain S / ATCC MYA-4624 / DSM 980 / FGSC 10383) (Pleurage anserina).